The primary structure comprises 239 residues: Probable transcriptional regulatory protein BCQ_0605 (239 aa).

This sequence belongs to the TACO1 family. YeeN subfamily.

It localises to the cytoplasm. This is Probable transcriptional regulatory protein BCQ_0605 from Bacillus cereus (strain Q1).